A 669-amino-acid chain; its full sequence is Acetolactate synthase, mitochondrial (669 aa).

The N-terminal 140 residues, 1-140, are a transit peptide targeting the mitochondrion; sequence MTVLAPLRRL…PRHEQAAGHA (140 aa). A thiamine diphosphate-binding site is contributed by Glu-134. Residues Arg-236, 351-372, and 403-422 contribute to the FAD site; these read HGSG…LGVR and DISP…IEGD. The thiamine pyrophosphate binding stretch occupies residues 497-577; the sequence is AHQMWAATFY…VKILILNNEE (81 aa). Mg(2+) is bound by residues Asp-548 and Asn-575.

It belongs to the TPP enzyme family. The cofactor is Mg(2+). Thiamine diphosphate serves as cofactor.

Its subcellular location is the mitochondrion. The enzyme catalyses 2 pyruvate + H(+) = (2S)-2-acetolactate + CO2. The protein operates within amino-acid biosynthesis; L-isoleucine biosynthesis; L-isoleucine from 2-oxobutanoate: step 1/4. Its pathway is amino-acid biosynthesis; L-valine biosynthesis; L-valine from pyruvate: step 1/4. The sequence is that of Acetolactate synthase, mitochondrial (ilv1) from Schizosaccharomyces pombe (strain 972 / ATCC 24843) (Fission yeast).